Consider the following 228-residue polypeptide: Outer membrane protein assembly factor BamE (228 aa).

A signal peptide spans 1 to 29 (MNPILKGVYSPARLGVVALTLFGILGVTG). A lipid anchor (N-palmitoyl cysteine) is attached at cysteine 30. Cysteine 30 carries S-diacylglycerol cysteine lipidation. Residues 197 to 228 (DFFGSSKKDPDPQSPQLGPGTLNDVPKPADSK) are disordered.

This sequence belongs to the BamE family. In terms of assembly, part of the Bam complex.

The protein localises to the cell outer membrane. Part of the outer membrane protein assembly complex, which is involved in assembly and insertion of beta-barrel proteins into the outer membrane. In Polynucleobacter necessarius subsp. necessarius (strain STIR1), this protein is Outer membrane protein assembly factor BamE.